Reading from the N-terminus, the 459-residue chain is Lipase 4 (459 aa).

A signal peptide spans 1 to 14 (MLFLLFLLVAPIYA). An intrachain disulfide couples cysteine 110 to cysteine 281. The Charge relay system role is filled by serine 194. Asparagine 229 and asparagine 266 each carry an N-linked (GlcNAc...) asparagine glycan. Catalysis depends on charge relay system residues aspartate 343 and histidine 376. Cysteine 359 and cysteine 404 are oxidised to a cystine.

Belongs to the AB hydrolase superfamily. Lipase family. Class Lip subfamily.

The protein resides in the secreted. The catalysed reaction is a triacylglycerol + H2O = a diacylglycerol + a fatty acid + H(+). Its function is as follows. Secreted lipase that is able to hydrolyze both the neutral triacylglycerols and the monopalmitate ester Tween 40, allowing the use of hydrolyzed products as carbon sources. Has broad lipolytic activity, which may be important for colonization and subsequent infection, therefore contributing to the persistence and virulence in human tissue. This chain is Lipase 4, found in Candida albicans (strain SC5314 / ATCC MYA-2876) (Yeast).